Here is a 476-residue protein sequence, read N- to C-terminus: Flavin-dependent halogenase otaD (476 aa).

FAD is bound by residues G14 and G17. 2 residues coordinate chloride: S304 and G305. V306 provides a ligand contact to FAD.

It belongs to the flavin-dependent halogenase family.

The catalysed reaction is ochratoxin B + FADH2 + chloride + O2 = ochratoxin A + FAD + 2 H2O. It functions in the pathway mycotoxin biosynthesis. In terms of biological role, flavin-dependent halogenase; part of the gene cluster that mediates the biosynthesis of ochratoxin A (OTA), a mycotoxin composed of a chlorinated type I polyketide dihydroisocoumarin moiety linked to L-phenylalanine, and demonstrated to have nephrotoxic, immunotoxic, genotoxic, neurotoxic, and teratogenic properties. OtaD chlorinates ochratoxin B (OTB) at the C-5 position to form OTA. The pathway begins with the highly reducing polyketide synthase otaA that catalyzes the formation of the isocoumarin group during the initial stages of biosynthesis, starting from one acetate and 4 malonate units, to originate the characteristic pentaketide skeleton 7-methylmellein (7-MM) of the OTA molecule. The newly identified cyclase otaY might be involved in the polyketide cyclization reaction during the initial steps of the OTA biosynthesis. 7-MM is then oxidized into 7-carboxymellein (also called ochratoxin beta) by the cytochrome P450 monooxygenase otaC. The NRPS encoded by the otaB gene is involved in the linking of phenylalanine to the dihydroisocoumarin ring. The reaction catalyzed by NRPS results in the production of ochratoxin B (OTB), which is the non-chlorinated analog of OTA and which subsequently serves as the substrate of the halogenase otaD for chlorination activity to form the final molecular structure of OTA, containing a chlorine atom in the C-5 position of the molecule. This is Flavin-dependent halogenase otaD from Aspergillus niger (strain ATCC MYA-4892 / CBS 513.88 / FGSC A1513).